The chain runs to 315 residues: Ribosomal protein L11 methyltransferase (315 aa).

S-adenosyl-L-methionine-binding residues include Thr-163, Gly-185, Asp-207, and Asn-249.

It belongs to the methyltransferase superfamily. PrmA family.

Its subcellular location is the cytoplasm. The enzyme catalyses L-lysyl-[protein] + 3 S-adenosyl-L-methionine = N(6),N(6),N(6)-trimethyl-L-lysyl-[protein] + 3 S-adenosyl-L-homocysteine + 3 H(+). In terms of biological role, methylates ribosomal protein L11. The protein is Ribosomal protein L11 methyltransferase of Lactobacillus helveticus (strain DPC 4571).